We begin with the raw amino-acid sequence, 419 residues long: Histidine--tRNA ligase (419 aa).

The protein belongs to the class-II aminoacyl-tRNA synthetase family.

Its subcellular location is the cytoplasm. It catalyses the reaction tRNA(His) + L-histidine + ATP = L-histidyl-tRNA(His) + AMP + diphosphate + H(+). In Pyrobaculum arsenaticum (strain DSM 13514 / JCM 11321 / PZ6), this protein is Histidine--tRNA ligase.